The chain runs to 588 residues: Phosphomethylpyrimidine synthase (588 aa).

Substrate-binding positions include Asn212, Met241, Tyr270, His306, 326–328, 367–370, and Glu406; these read SRG and DGLR. Position 410 (His410) interacts with Zn(2+). Tyr433 contributes to the substrate binding site. A Zn(2+)-binding site is contributed by His474. [4Fe-4S] cluster contacts are provided by Cys554, Cys557, and Cys562.

The protein belongs to the ThiC family. In terms of assembly, homodimer. Requires [4Fe-4S] cluster as cofactor.

It carries out the reaction 5-amino-1-(5-phospho-beta-D-ribosyl)imidazole + S-adenosyl-L-methionine = 4-amino-2-methyl-5-(phosphooxymethyl)pyrimidine + CO + 5'-deoxyadenosine + formate + L-methionine + 3 H(+). It functions in the pathway cofactor biosynthesis; thiamine diphosphate biosynthesis. Functionally, catalyzes the synthesis of the hydroxymethylpyrimidine phosphate (HMP-P) moiety of thiamine from aminoimidazole ribotide (AIR) in a radical S-adenosyl-L-methionine (SAM)-dependent reaction. The polypeptide is Phosphomethylpyrimidine synthase (Bartonella quintana (strain Toulouse) (Rochalimaea quintana)).